Consider the following 366-residue polypeptide: Structure-specific endonuclease subunit SLX1 (366 aa).

One can recognise a GIY-YIG domain in the interval Ala-14–Asp-95. Disordered regions lie at residues Ile-31 to Gly-59 and Arg-102 to Pro-124. Over residues Gly-109 to Pro-123 the composition is skewed to basic residues. The SLX1-type zinc-finger motif lies at Cys-234 to Cys-289. The segment at Lys-317–Arg-366 is disordered. Positions Glu-339–Pro-359 are enriched in acidic residues.

This sequence belongs to the SLX1 family. Forms a heterodimer with SLX4. It depends on a divalent metal cation as a cofactor.

The protein localises to the nucleus. In terms of biological role, catalytic subunit of the SLX1-SLX4 structure-specific endonuclease that resolves DNA secondary structures generated during DNA repair and recombination. Has endonuclease activity towards branched DNA substrates, introducing single-strand cuts in duplex DNA close to junctions with ss-DNA. In Phaeosphaeria nodorum (strain SN15 / ATCC MYA-4574 / FGSC 10173) (Glume blotch fungus), this protein is Structure-specific endonuclease subunit SLX1.